Here is a 412-residue protein sequence, read N- to C-terminus: Heme chaperone HemW (412 aa).

A Radical SAM core domain is found at 4–241; that stretch reads GTYLMPTAAY…RHGQEVLTQA (238 aa). Residue Y13 coordinates S-adenosyl-L-methionine. The [2Fe-2S] cluster site is built by C19, C23, and C26. S-adenosyl-L-methionine-binding positions include G72, 73 to 74, E105, Q132, R144, and D169; that span reads GT.

Belongs to the anaerobic coproporphyrinogen-III oxidase family. HemW subfamily. The cofactor is [4Fe-4S] cluster.

The protein resides in the cytoplasm. In terms of biological role, probably acts as a heme chaperone, transferring heme to an unknown acceptor. Binds one molecule of heme per monomer, possibly covalently. Binds 1 [2Fe-2S] cluster. Although this protein has sequence motifs typically found in proteins binding the [4Fe-4S]-AdoMet radical-SAM cluster and S-adenosylmethionine, spectroscopic evidence suggests that a [2Fe-2S] cluster is present; S-adenosylmethionine was not detected. Has no detectable coproporphyrinogen-III oxidase activity. This chain is Heme chaperone HemW, found in Synechocystis sp. (strain ATCC 27184 / PCC 6803 / Kazusa).